The following is a 399-amino-acid chain: Acetate kinase (399 aa).

Asparagine 10 is a Mg(2+) binding site. Position 17 (lysine 17) interacts with ATP. Substrate is bound at residue arginine 91. The active-site Proton donor/acceptor is aspartate 150. Residues 210 to 214 (HLGNG), 285 to 287 (DFR), and 333 to 337 (GIGEN) each bind ATP. Glutamate 387 is a Mg(2+) binding site.

It belongs to the acetokinase family. Homodimer. Requires Mg(2+) as cofactor. It depends on Mn(2+) as a cofactor.

The protein localises to the cytoplasm. The catalysed reaction is acetate + ATP = acetyl phosphate + ADP. It functions in the pathway metabolic intermediate biosynthesis; acetyl-CoA biosynthesis; acetyl-CoA from acetate: step 1/2. Its function is as follows. Catalyzes the formation of acetyl phosphate from acetate and ATP. Can also catalyze the reverse reaction. This is Acetate kinase from Wigglesworthia glossinidia brevipalpis.